The chain runs to 397 residues: Acetate kinase 1 (397 aa).

Mg(2+) is bound at residue Asn-8. ATP is bound at residue Lys-15. Arg-89 provides a ligand contact to substrate. Asp-146 (proton donor/acceptor) is an active-site residue. Residues 206-210, 281-283, and 329-333 each bind ATP; these read HLGNG, DLR, and GIGEN. Position 382 (Glu-382) interacts with Mg(2+).

It belongs to the acetokinase family. As to quaternary structure, homodimer. Mg(2+) serves as cofactor. Mn(2+) is required as a cofactor.

The protein resides in the cytoplasm. It catalyses the reaction acetate + ATP = acetyl phosphate + ADP. The protein operates within metabolic intermediate biosynthesis; acetyl-CoA biosynthesis; acetyl-CoA from acetate: step 1/2. Catalyzes the formation of acetyl phosphate from acetate and ATP. Can also catalyze the reverse reaction. This chain is Acetate kinase 1, found in Listeria monocytogenes serovar 1/2a (strain ATCC BAA-679 / EGD-e).